The chain runs to 244 residues: Serine-rich single-pass membrane protein 1 (244 aa).

The helical transmembrane segment at 35 to 55 (CGTIGNFLLWYFVIVFVLMFF) threads the bilayer. Disordered stretches follow at residues 65–112 (DKKD…LTPV), 132–191 (QSQF…LGSY), and 213–244 (HSQQ…FSKF). Residues 80 to 94 (ASKETSYKWQSKDGA) show a composition bias toward basic and acidic residues. 2 stretches are compositionally biased toward polar residues: residues 97–112 (PSQT…LTPV) and 132–142 (QSQFNEVNQNQ). The span at 161-176 (SWKESESEHHPSPDSI) shows a compositional bias: basic and acidic residues. Polar residues predominate over residues 231–244 (ESSISDINTKFSKF).

It is found in the membrane. The chain is Serine-rich single-pass membrane protein 1 (SSMEM1) from Macaca fascicularis (Crab-eating macaque).